An 815-amino-acid polypeptide reads, in one-letter code: Ataxin-1 (815 aa).

The span at 1–41 shows a compositional bias: basic and acidic residues; that stretch reads MKSNQERSNECLPPKKREIPATSRSSEEKAPTLPSDNHRVE. The disordered stretch occupies residues 1–63; sequence MKSNQERSNE…GHGGGRHGPA (63 aa). Lysine 16 is covalently cross-linked (Glycyl lysine isopeptide (Lys-Gly) (interchain with G-Cter in SUMO)). Residues 49-61 are compositionally biased toward gly residues; the sequence is NPGGRGHGGGRHG. Phosphoserine is present on residues serine 82 and serine 88. Disordered regions lie at residues 185-270, 329-355, and 397-424; these read GSLS…PVHL, EKSR…VPHP, and VQQA…PGHR. Lysine 194 is covalently cross-linked (Glycyl lysine isopeptide (Lys-Gly) (interchain with G-Cter in SUMO)). The span at 197–226 shows a compositional bias: low complexity; sequence QQQQQQQQQQQQHQHQQQQQQQQQQQQQQH. Residues serine 238 and serine 253 each carry the phosphoserine modification. Residues 243–260 show a composition bias toward polar residues; that stretch reads QQNQYVHISSSPQNTGRT. The segment at 494–604 is self-association; that stretch reads VGSTDMEASG…TEDFIQSAEI (111 aa). The segment at 538 to 815 is interaction with USP7; the sequence is LVTQAAYPAM…CIEGRSNVGK (278 aa). An RNA-binding region spans residues 540-766; that stretch reads TQAAYPAMVQ…FLTKIEPSKP (227 aa). In terms of domain architecture, AXH spans 562 to 693; it reads SPAAAPPTLP…SLTLKNLKNG (132 aa). Residues lysine 609, lysine 696, and lysine 745 each participate in a glycyl lysine isopeptide (Lys-Gly) (interchain with G-Cter in SUMO) cross-link. The tract at residues 762–798 is disordered; sequence EPSKPAATRKRRWSAPESRKLEKSEDEPPLTLPKPSL. Position 775 is a phosphoserine (serine 775). The Nuclear localization signal motif lies at 794–797; that stretch reads PKPS.

Belongs to the ATXN1 family. In terms of assembly, homooligomer. Interacts with CIC. Interacts with ANP32A, PQBP1, UBQLN4, ATXN1L and USP7. Directly interacts with RBPJ; this interaction is disrupted in the presence of Notch intracellular domain. Competes with ATXN1L for RBPJ-binding. Found in a complex with CIC and ATXN1L. Ubiquitinated by UBE3A, leading to its degradation by the proteasome. The presence of expanded poly-Gln repeats in spinocerebellar ataxia 1 (SCA1) patients impairs ubiquitination and degradation, leading to accumulation of ATXN1 in neurons and subsequent toxicity. In terms of processing, phosphorylation at Ser-775 increases the pathogenicity of proteins with an expanded polyglutamine tract. Post-translationally, sumoylation is dependent on nuclear localization and phosphorylation at Ser-775. It is reduced in the presence of an expanded polyglutamine tract. In terms of tissue distribution, widely expressed throughout the body.

The protein resides in the cytoplasm. The protein localises to the nucleus. Chromatin-binding factor that repress Notch signaling in the absence of Notch intracellular domain by acting as a CBF1 corepressor. Binds to the HEY promoter and might assist, along with NCOR2, RBPJ-mediated repression. Binds RNA in vitro. May be involved in RNA metabolism. In concert with CIC and ATXN1L, involved in brain development. The polypeptide is Ataxin-1 (ATXN1) (Homo sapiens (Human)).